The chain runs to 394 residues: Elongation factor Tu (394 aa).

The tr-type G domain occupies 10-204 (KPHVNVGTIG…ALDSYIPEPE (195 aa)). Residues 19–26 (GHVDHGKT) are G1. 19 to 26 (GHVDHGKT) provides a ligand contact to GTP. T26 serves as a coordination point for Mg(2+). The G2 stretch occupies residues 60-64 (GITIS). A G3 region spans residues 81–84 (DCPG). GTP contacts are provided by residues 81–85 (DCPGH) and 136–139 (NKCD). A G4 region spans residues 136 to 139 (NKCD). The segment at 174 to 176 (SAL) is G5.

This sequence belongs to the TRAFAC class translation factor GTPase superfamily. Classic translation factor GTPase family. EF-Tu/EF-1A subfamily. In terms of assembly, monomer.

The protein resides in the cytoplasm. The catalysed reaction is GTP + H2O = GDP + phosphate + H(+). In terms of biological role, GTP hydrolase that promotes the GTP-dependent binding of aminoacyl-tRNA to the A-site of ribosomes during protein biosynthesis. The protein is Elongation factor Tu of Alteromonas mediterranea (strain DSM 17117 / CIP 110805 / LMG 28347 / Deep ecotype).